We begin with the raw amino-acid sequence, 366 residues long: Peptide chain release factor 2 (366 aa).

N5-methylglutamine is present on Gln253.

It belongs to the prokaryotic/mitochondrial release factor family. Methylated by PrmC. Methylation increases the termination efficiency of RF2.

The protein localises to the cytoplasm. In terms of biological role, peptide chain release factor 2 directs the termination of translation in response to the peptide chain termination codons UGA and UAA. This Yersinia pseudotuberculosis serotype I (strain IP32953) protein is Peptide chain release factor 2.